The chain runs to 689 residues: Glycine--tRNA ligase beta subunit (689 aa).

Belongs to the class-II aminoacyl-tRNA synthetase family. Tetramer of two alpha and two beta subunits.

The protein localises to the cytoplasm. The enzyme catalyses tRNA(Gly) + glycine + ATP = glycyl-tRNA(Gly) + AMP + diphosphate. The chain is Glycine--tRNA ligase beta subunit from Oenococcus oeni (strain ATCC BAA-331 / PSU-1).